The chain runs to 213 residues: Uracil phosphoribosyltransferase (213 aa).

Residues arginine 78, arginine 103, and 130-138 (DPMLATGGS) contribute to the 5-phospho-alpha-D-ribose 1-diphosphate site. Residues isoleucine 193 and 198 to 200 (GDA) each bind uracil. Position 199 (aspartate 199) interacts with 5-phospho-alpha-D-ribose 1-diphosphate.

The protein belongs to the UPRTase family. Requires Mg(2+) as cofactor.

The catalysed reaction is UMP + diphosphate = 5-phospho-alpha-D-ribose 1-diphosphate + uracil. It participates in pyrimidine metabolism; UMP biosynthesis via salvage pathway; UMP from uracil: step 1/1. Allosterically activated by GTP. Its function is as follows. Catalyzes the conversion of uracil and 5-phospho-alpha-D-ribose 1-diphosphate (PRPP) to UMP and diphosphate. This is Uracil phosphoribosyltransferase from Bordetella bronchiseptica (strain ATCC BAA-588 / NCTC 13252 / RB50) (Alcaligenes bronchisepticus).